A 323-amino-acid chain; its full sequence is Polycomb complex protein BMI-1-B (323 aa).

An RING-type zinc finger spans residues 18-57 (CVLCGGYFIDAATIIECLHSFCKTCIVRYLETSKYCPICD). Residues 81-95 (KLVPGLFKGEMKRRR) carry the Nuclear localization signal motif. The segment at 238–310 (PHTDRINNTS…HQNPFANRAR (73 aa)) is disordered. Over residues 287-301 (HISSTINGTNSSSSH) the composition is skewed to low complexity.

Component of a PRC1-like complex. Interacts with cbx4.

The protein localises to the nucleus. Functionally, component of a Polycomb group (PcG) multiprotein PRC1-like complex, a complex class required to maintain the transcriptionally repressive state of many genes, including Hox genes, throughout development. PcG PRC1 complex acts via chromatin remodeling and modification of histones; it mediates monoubiquitination of histone H2A 'Lys-119', rendering chromatin heritably changed in its expressibility. In the PRC1 complex, it is required to stimulate the E3 ubiquitin-protein ligase activity of rnf2. In Xenopus laevis (African clawed frog), this protein is Polycomb complex protein BMI-1-B (bmi1b).